The sequence spans 77 residues: Bradykinin-potentiating peptide (77 aa).

The signal sequence occupies residues M1–S22. The propeptide occupies R74–R77.

Belongs to the non-disulfide-bridged peptide (NDBP) superfamily. Long chain multifunctional peptide (group 2) family. Expressed by the venom gland.

The protein resides in the secreted. Its function is as follows. Antimicrobial peptide. May also inhibit angiotensin-converting enzyme (ACE) and potentiate bradykinin (BK). In Tityus discrepans (Venezuelan scorpion), this protein is Bradykinin-potentiating peptide.